The following is a 246-amino-acid chain: Mast cell protease 4 (246 aa).

The first 18 residues, 1-18, serve as a signal peptide directing secretion; it reads MQALLFLMALLLPSGAGA. The propeptide at 19–20 is activation peptide; that stretch reads EE. The Peptidase S1 domain occupies 21–244; that stretch reads IIGGVESRPH…YVPWINRVIK (224 aa). A disulfide bond links Cys50 and Cys66. Residues His65 and Asp109 each act as charge relay system in the active site. 2 disulfide bridges follow: Cys143–Cys208 and Cys174–Cys187. Residue Ser202 is the Charge relay system of the active site.

This sequence belongs to the peptidase S1 family. Granzyme subfamily. In terms of assembly, monomer. Interacts with iripin-2, a serine protease inhibitor from Ixodes ricinus saliva. As to expression, submucosal mast cells. In femoral muscle, detected in myocytes but not in mast cells.

Completely inhibited by serine protease inhibitors such as chymostatin, diisopropylfluorophosphate and phenylmethylsulfonyl fluoride, but not by p-tosyl-L-phenylalanine chloromethyl ketone, p-tosyl-L-lysine chloromethyl ketone, pepstatin, E-64, EDTA or o-phenanthroline. Also inhibited by lima bean trypsin inhibitor, soy bean trypsin inhibitor and human plasma alpha1-antichymotrypsin. Functionally, has chymotrypsin-like activity. Hydrolyzes the amide bonds of synthetic substrates having Tyr and Phe residues at the P1 position. Preferentially hydrolyzes the 'Tyr-4-|-Ile-5' bond of angiotensin I and the 'Phe-20-|-Ala-21' bond of amyloid beta-protein, and is less active towards the 'Phe-8-|-His-9' bond of angiotensin I and the 'Phe-4-|-Ala-5' and 'Tyr-10-|-Glu-11' bonds of amyloid beta-protein. Involved in thrombin regulation and fibronectin processing. The protein is Mast cell protease 4 (Mcpt4) of Mus musculus (Mouse).